We begin with the raw amino-acid sequence, 262 residues long: Steroid 5-alpha-reductase DET2 (262 aa).

Transmembrane regions (helical) follow at residues Cys13–Ala33, Ile51–Gly71, Ser79–Leu99, Phe113–Ala133, Trp148–Ile168, and Ala205–Leu225.

The protein belongs to the steroid 5-alpha reductase family.

It localises to the membrane. It carries out the reaction a 3-oxo-5alpha-steroid + NADP(+) = a 3-oxo-Delta(4)-steroid + NADPH + H(+). It catalyses the reaction 5alpha-campestan-3-one + NADP(+) = campest-4-en-3-one + NADPH + H(+). The catalysed reaction is (22S,24R)-22-hydroxy-5alpha-ergostan-3-one + NADP(+) = (22S)-22-hydroxycampest-4-en-3-one + NADPH + H(+). The enzyme catalyses 3-dehydro-6-deoxoteasterone + NADP(+) = (22R,23R)-22,23-dihydroxycampest-4-en-3-one + NADPH + H(+). It functions in the pathway plant hormone biosynthesis; brassinosteroid biosynthesis. Inhibited by the 4-azasteroids 4-MA. In terms of biological role, involved in a reduction step in the biosynthesis of the plant steroid, brassinolide (BL); acts at the second step in brassinolide biosynthesis in the 5alpha-reduction of (24R)- 24-methylcholest-4-en-3-one, which is further modified to form campestanol. Can use progesterone, testosterone, androstenedione and campestenone as substrate. Also catalyzes the conversion of campest-4-en-3-one (campesta-4-en-3-one, 4-en-3-one) to campest-3-one (campesta-3-one, 3-one), of (22S,24R)-22-hydroxyergost-4-en-3-one (22-hydroxy-campesta-4-en-3-one, 22-OH-4-en-3-one) to (22S,24R)-22-hydroxy-5alpha-ergostan-3-one (22-hydroxy-campesta-3-one, 22-OH-3-one), and of (22R,23R)-22,23-dihydroxy-5alpha-campestan-3-one (22,23,diOH-4-en-3-one) to (22R,23R)-22,23-dihydroxycampest-4-en-3-one (6-deoxo3DT). Required for the brassinosteroid- (BR) dependent regulation of seed size and shape as well as embryo development. The sequence is that of Steroid 5-alpha-reductase DET2 from Arabidopsis thaliana (Mouse-ear cress).